A 115-amino-acid polypeptide reads, in one-letter code: Large ribosomal subunit protein bL19 (115 aa).

Belongs to the bacterial ribosomal protein bL19 family.

Its function is as follows. This protein is located at the 30S-50S ribosomal subunit interface and may play a role in the structure and function of the aminoacyl-tRNA binding site. The sequence is that of Large ribosomal subunit protein bL19 from Thermosipho africanus (strain TCF52B).